We begin with the raw amino-acid sequence, 366 residues long: MTVTGIIAEFNPFHYGHQYLLSQAKGLKIVAMSGNFVQRGEPALVDKWVRAQMALENGADLVVELPFLVSVQSADYFAQGAVDILMRLGIDTLAFGTEQLFDYQKLSRLYSEQAEHMTAYLATLPDHLSYPQKTQSMWEAFAGLSATGDRPNHLLALSYVKASAGKKLQLQPIKRLGAGFHSEAKDQCLSSATAIRKHIADRAFVEKSSPNAALILRAPQVTWEHYFPLLKYHILTAPDLTQFFQVNDELASRISAAIRSVATVDELVEAVATKHYTKARVRRVLTYILVKAVEAPLPEGIHVLGFSKKGQAHLKTIKASVPLISRIGAKPWDQLTQRADTVYQLGHMDMPEQTWGRVPIRPGAMN.

ATP-binding positions include 7–20, G96, N152, and R175; that span reads IAEF…HQYL.

It belongs to the TmcAL family.

Its subcellular location is the cytoplasm. It catalyses the reaction cytidine(34) in elongator tRNA(Met) + acetate + ATP = N(4)-acetylcytidine(34) in elongator tRNA(Met) + AMP + diphosphate. Functionally, catalyzes the formation of N(4)-acetylcytidine (ac(4)C) at the wobble position of elongator tRNA(Met), using acetate and ATP as substrates. First activates an acetate ion to form acetyladenylate (Ac-AMP) and then transfers the acetyl group to tRNA to form ac(4)C34. The sequence is that of tRNA(Met) cytidine acetate ligase from Streptococcus equi subsp. zooepidemicus (strain MGCS10565).